We begin with the raw amino-acid sequence, 450 residues long: MGKENAVSRPFTRSLASALRASEVTSTTQNQQRVNTKRPALEDTRATGPNKRKKRAVLGEITNVNSNTAILEAKNSKQIKKGRGHGLASTSQLATSVTSEVTDLQSRTDAKVEVASNTAGNLSVSKGTDNTADNCIEIWNSRLPPRPLGRSASTAEKSAVIGSSTVPDIPKFVDIDSDDKDPLLCCLYAPEIHYNLRVSELKRRPLPDFMERIQKDVTQSMRGILVDWLVEVSEEYTLASDTLYLTVYLIDWFLHGNYVQRQQLQLLGITCMLIASKYEEISAPRIEEFCFITDNTYTRDQVLEMENQVLKHFSFQIYTPTPKTFLRRFLRAAQASRLSPSLEVEFLASYLTELTLIDYHFLKFLPSVVAASAVFLAKWTMDQSNHPWNPTLEHYTTYKASDLKASVHALQDLQLNTKGCPLSAIRMKYRQEKYKSVAVLTSPKLLDTLF.

Disordered regions lie at residues 18-53 and 75-94; these read ALRASEVTSTTQNQQRVNTKRPALEDTRATGPNKRK and NSKQIKKGRGHGLASTSQLA. Polar residues predominate over residues 23–34; it reads EVTSTTQNQQRV.

This sequence belongs to the cyclin family. Cyclin AB subfamily. In terms of assembly, interacts with CDKA-1. Interacts with SAMBA.

It localises to the nucleus. Its function is as follows. Negatively regulates endocycles and acts as a regulator of ploidy levels in endoreduplication. Promotes divisions in the guard cells (GCs) after the guard mother cells (GMC) symmetric division. The polypeptide is Cyclin-A2-3 (CYCA2-3) (Arabidopsis thaliana (Mouse-ear cress)).